The chain runs to 517 residues: ATP synthase subunit alpha 1 (517 aa).

176–183 (GDRQTGKT) serves as a coordination point for ATP.

It belongs to the ATPase alpha/beta chains family. As to quaternary structure, F-type ATPases have 2 components, CF(1) - the catalytic core - and CF(0) - the membrane proton channel. CF(1) has five subunits: alpha(3), beta(3), gamma(1), delta(1), epsilon(1). CF(0) has three main subunits: a(1), b(2) and c(9-12). The alpha and beta chains form an alternating ring which encloses part of the gamma chain. CF(1) is attached to CF(0) by a central stalk formed by the gamma and epsilon chains, while a peripheral stalk is formed by the delta and b chains.

The protein localises to the cell inner membrane. The catalysed reaction is ATP + H2O + 4 H(+)(in) = ADP + phosphate + 5 H(+)(out). Its function is as follows. Produces ATP from ADP in the presence of a proton gradient across the membrane. The alpha chain is a regulatory subunit. This chain is ATP synthase subunit alpha 1, found in Shewanella frigidimarina (strain NCIMB 400).